A 293-amino-acid polypeptide reads, in one-letter code: Urease accessory protein UreD (293 aa).

The protein belongs to the UreD family. UreD, UreF and UreG form a complex that acts as a GTP-hydrolysis-dependent molecular chaperone, activating the urease apoprotein by helping to assemble the nickel containing metallocenter of UreC. The UreE protein probably delivers the nickel.

The protein localises to the cytoplasm. Functionally, required for maturation of urease via the functional incorporation of the urease nickel metallocenter. The sequence is that of Urease accessory protein UreD from Arthrobacter sp. (strain FB24).